We begin with the raw amino-acid sequence, 292 residues long: MNERYQLNKNLAQMLKGGVIMDVVNAKEAEIAQKAGAVAVMALERVPSDIRKAGGVARMSDPKMIKDIQSAVSIPVMAKVRIGHFVEAQVLEALSIDYIDESEVLTPADEEFHIDKHTFKVPFVCGAKNLGEALRRISEGASMIRTKGEAGTGNVVEAVRHMRTVTNEIRKVQSASKQELMTIAKEFGAPYDLILYVHENGKLPVINFAAGGIATPADAALMMQLGCDGVFVGSGIFKSSDPAKRAKAIVKATTYYNDPQIIAEVSEELGTAMDSIDVRELTGNSLYASRGW.

Aspartate 22 is a binding site for D-ribose 5-phosphate. Lysine 79 functions as the Schiff-base intermediate with D-ribose 5-phosphate in the catalytic mechanism. Glycine 151 contacts D-ribose 5-phosphate. Arginine 163 lines the D-glyceraldehyde 3-phosphate pocket. D-ribose 5-phosphate is bound by residues glycine 212 and 233-234 (GS).

This sequence belongs to the PdxS/SNZ family. As to quaternary structure, in the presence of PdxT, forms a dodecamer of heterodimers.

The catalysed reaction is aldehydo-D-ribose 5-phosphate + D-glyceraldehyde 3-phosphate + L-glutamine = pyridoxal 5'-phosphate + L-glutamate + phosphate + 3 H2O + H(+). It functions in the pathway cofactor biosynthesis; pyridoxal 5'-phosphate biosynthesis. Functionally, catalyzes the formation of pyridoxal 5'-phosphate from ribose 5-phosphate (RBP), glyceraldehyde 3-phosphate (G3P) and ammonia. The ammonia is provided by the PdxT subunit. Can also use ribulose 5-phosphate and dihydroxyacetone phosphate as substrates, resulting from enzyme-catalyzed isomerization of RBP and G3P, respectively. This Ruminiclostridium cellulolyticum (strain ATCC 35319 / DSM 5812 / JCM 6584 / H10) (Clostridium cellulolyticum) protein is Pyridoxal 5'-phosphate synthase subunit PdxS.